The chain runs to 283 residues: Acetyl-coenzyme A carboxylase carboxyl transferase subunit beta (283 aa).

One can recognise a CoA carboxyltransferase N-terminal domain in the interval 27–283; sequence VWVKCERCGE…LLDLHLRGEK (257 aa). Zn(2+) contacts are provided by Cys-31, Cys-34, Cys-50, and Cys-53. The C4-type zinc-finger motif lies at 31–53; sequence CERCGEILFKKELDKNYKVCLKC.

Belongs to the AccD/PCCB family. In terms of assembly, acetyl-CoA carboxylase is a heterohexamer composed of biotin carboxyl carrier protein (AccB), biotin carboxylase (AccC) and two subunits each of ACCase subunit alpha (AccA) and ACCase subunit beta (AccD). Zn(2+) serves as cofactor.

It localises to the cytoplasm. It catalyses the reaction N(6)-carboxybiotinyl-L-lysyl-[protein] + acetyl-CoA = N(6)-biotinyl-L-lysyl-[protein] + malonyl-CoA. Its pathway is lipid metabolism; malonyl-CoA biosynthesis; malonyl-CoA from acetyl-CoA: step 1/1. Its function is as follows. Component of the acetyl coenzyme A carboxylase (ACC) complex. Biotin carboxylase (BC) catalyzes the carboxylation of biotin on its carrier protein (BCCP) and then the CO(2) group is transferred by the transcarboxylase to acetyl-CoA to form malonyl-CoA. The protein is Acetyl-coenzyme A carboxylase carboxyl transferase subunit beta of Pelotomaculum thermopropionicum (strain DSM 13744 / JCM 10971 / SI).